The chain runs to 347 residues: Ribosomal RNA small subunit methyltransferase H (347 aa).

Residues 50 to 52 (GGH), aspartate 69, phenylalanine 96, aspartate 125, and glutamine 132 contribute to the S-adenosyl-L-methionine site.

Belongs to the methyltransferase superfamily. RsmH family.

The protein resides in the cytoplasm. It carries out the reaction cytidine(1402) in 16S rRNA + S-adenosyl-L-methionine = N(4)-methylcytidine(1402) in 16S rRNA + S-adenosyl-L-homocysteine + H(+). In terms of biological role, specifically methylates the N4 position of cytidine in position 1402 (C1402) of 16S rRNA. In Corynebacterium aurimucosum (strain ATCC 700975 / DSM 44827 / CIP 107346 / CN-1) (Corynebacterium nigricans), this protein is Ribosomal RNA small subunit methyltransferase H.